A 299-amino-acid polypeptide reads, in one-letter code: Acetylglutamate kinase (299 aa).

Substrate-binding positions include 70 to 71 (GG), Arg-92, and Asn-197.

It belongs to the acetylglutamate kinase family. ArgB subfamily.

The protein localises to the cytoplasm. It catalyses the reaction N-acetyl-L-glutamate + ATP = N-acetyl-L-glutamyl 5-phosphate + ADP. The protein operates within amino-acid biosynthesis; L-arginine biosynthesis; N(2)-acetyl-L-ornithine from L-glutamate: step 2/4. Catalyzes the ATP-dependent phosphorylation of N-acetyl-L-glutamate. This is Acetylglutamate kinase from Acidiphilium cryptum (strain JF-5).